Consider the following 779-residue polypeptide: Kazrin (779 aa).

Residues 79-261 adopt a coiled-coil conformation; that stretch reads AQVLLREEVV…LATLTKDVPK (183 aa). The disordered stretch occupies residues 295–366; it reads QQTLYHSHPP…PGPVQKSLHN (72 aa). Phosphoserine occurs at positions 356, 371, and 391. A disordered region spans residues 403-429; the sequence is KSLDPGLFDDSDSQCSPTRHSLSLSEG. A compositionally biased stretch (polar residues) spans 415–426; sequence SQCSPTRHSLSL. SAM domains follow at residues 450-515, 528-592, and 616-683; these read WKAG…YRDA, DHHW…LYQV, and WTNQ…STIF. Positions 685–779 are disordered; sequence PSNSTGIRES…GYGSLEVTNV (95 aa). The span at 736–746 shows a compositional bias: basic and acidic residues; it reads SSKEPDFHDDY.

The protein belongs to the kazrin family. In terms of tissue distribution, expressed in skin interfollicular epidermis and hair follicles. Expressed in tongue epithelium basal suprabasal layers.

The protein resides in the cell junction. Its subcellular location is the nucleus. It localises to the cytoplasm. It is found in the cytoskeleton. Functionally, component of the cornified envelope of keratinocytes. May be involved in the interplay between adherens junctions and desmosomes. The function in the nucleus is not known. This Mus musculus (Mouse) protein is Kazrin (Kazn).